A 216-amino-acid polypeptide reads, in one-letter code: MCLRIGGLNVDEFRKLLMKTGLVLVVLGHVSFIAAAVLHGTMLRFVATTRDAVVLQYCVVDILSVTSAIVVILAGISAVILSRYLPSTPLRWTVFSLSVACALLSLTCALGLLASIAVTFATKGRALLAPCTFENTELPTLAPDCPFDPTRIYSSSLCLWAISLIFCLAESMSAVRCAQLVHRLLELRPWWGKSCHHTIQASPEPLDGHDLLSCTS.

Transmembrane regions (helical) follow at residues 22–42 (LVLVVLGHVSFIAAAVLHGTM), 62–82 (ILSVTSAIVVILAGISAVILS), 94–114 (VFSLSVACALLSLTCALGLLA), and 155–175 (SSLCLWAISLIFCLAESMSAV).

Belongs to the TMEM54 family.

It is found in the membrane. In Rattus norvegicus (Rat), this protein is Transmembrane protein 54 (Tmem54).